Here is a 297-residue protein sequence, read N- to C-terminus: NAC domain-containing protein 72 (297 aa).

The 149-residue stretch at 14-162 (LPPGFRFYPT…DWVLCRIYKK (149 aa)) folds into the NAC domain. The DNA-binding element occupies 111–168 (VGIKKALVFYAGKAPKGTKTNWIMHEYRLIEHSRSHGSSKLDDWVLCRIYKKTSGSQR). Disordered stretches follow at residues 168–195 (RQAVTPVQACREEHSTNGSSSSSSSQLD) and 259–278 (GEAESGHVNRQQNSSGLTQS). Residues 266–277 (VNRQQNSSGLTQ) show a composition bias toward polar residues.

Expressed in leaves and in root pericycle and epidermis.

The protein localises to the nucleus. Transcription factors that bind specifically to the 5'-CATGTG-3' motif and with bipartite regions with 5'-CGTr-3' and 5'-YACG-3' as cores. Involved in the regulation of metabolic reprogramming during senescence by promoting the chloroplast protein degradation and the catabolism of lysine, phytol and free fatty acids via the induction of CV, LKR/SDH and PES1 expression. Also triggers the degradation of starch and the accumulation of mono- and disaccharides during senescence by enhancing the expression of AMY1, SFP1 and SWEET15. The sequence is that of NAC domain-containing protein 72 from Arabidopsis thaliana (Mouse-ear cress).